Reading from the N-terminus, the 491-residue chain is MSETKRVRVRYAPSPTGFLHIGNARTALFNYLFARHNDGDFIIRIEDTDAKRNVADGEESQMKNLKWLGMDWDEGVDVPGKYGPYRQSERQSIYEPLIQQLLDKGLAYKCYCTEEELEAEREKQKANGEMPRYSGKCRHLTKEQQAEKEAQGFKPSIRFKVPANETITFNDMVKDDVSFESNGIGDFVIAKKDGIPTYNFAVAVDDHLMEISHVLRGDDHISNTPKQILIYNAFGWEPPIFGHMTLIVNESRRKLSKRDGSIIQFIEQYRDLGYLPEALFNFIAMLGWSPEGEEEIFSKEEFIKMFDPKRLSKSPALFDNVKLTWVNNQYVKKLPLNDVVELSLPHLQKAGVVSADLDQAELDWVHKLVSLYHEQMSYGAEIVPLSEMFFADAESITFDEEEKAVLAEETVPKVISAFKKELEALDVLEAAEVKSAIKRVQKETGVKGKGLFMPIRIVTTGEMHGPELPLAIEVLGLEKVLNRLDTWLQNN.

A 'HIGH' region motif is present at residues 13 to 23 (PSPTGFLHIGN). The Zn(2+) site is built by Cys110, Cys112, Cys137, and His139. The 'KMSKS' region signature appears at 254-258 (KLSKR). Residue Lys257 participates in ATP binding.

Belongs to the class-I aminoacyl-tRNA synthetase family. Glutamate--tRNA ligase type 1 subfamily. Monomer. It depends on Zn(2+) as a cofactor.

It localises to the cytoplasm. The catalysed reaction is tRNA(Glu) + L-glutamate + ATP = L-glutamyl-tRNA(Glu) + AMP + diphosphate. Its function is as follows. Catalyzes the attachment of glutamate to tRNA(Glu) in a two-step reaction: glutamate is first activated by ATP to form Glu-AMP and then transferred to the acceptor end of tRNA(Glu). This Listeria innocua serovar 6a (strain ATCC BAA-680 / CLIP 11262) protein is Glutamate--tRNA ligase.